The sequence spans 330 residues: MSTKVEEILWAEKYRPKTLDDIVNQREIIDRLKKFVKEKNMPHLLFAGPPGTGKTTAALALVHDLYGDNYTEYFLELNASDERGIDVIRNKVKEFARTVIPGDIPFKVVLLDEADNMTADAQQALRRTMELYTENTRFILACNYLSKIIEPIQSRTALFRFYPLKKEDVVNRLIYIAKNEKAEYDQKALETIYDITMGDMRKSINILQAASAYGKISVEAVFKVLGLAQPKEVREMINLALQGKFTQARDKLRTLLITYGLSGEDIVKQIHREITSSEIQISEELRVLLLDYIGETEFRIIEGADDEIQLSALLAKMAIYGNKYIGSENR.

Residue 48–55 coordinates ATP; it reads GPPGTGKT.

This sequence belongs to the activator 1 small subunits family. RfcS subfamily. Heteropentamer composed of four small subunits (RfcS) and one large subunit (RfcL). A homotetramer of this subunit interacts with PCNA heterodimer PCNA1-PCNA2.

In terms of biological role, part of the RFC clamp loader complex which loads the PCNA sliding clamp onto DNA. The complex possesses DNA-dependent ATPase activity. The chain is Replication factor C small subunit (rfcS) from Saccharolobus solfataricus (strain ATCC 35092 / DSM 1617 / JCM 11322 / P2) (Sulfolobus solfataricus).